Consider the following 150-residue polypeptide: Large ribosomal subunit protein bL9 (150 aa).

It belongs to the bacterial ribosomal protein bL9 family.

In terms of biological role, binds to the 23S rRNA. The polypeptide is Large ribosomal subunit protein bL9 (Neisseria meningitidis serogroup B (strain ATCC BAA-335 / MC58)).